We begin with the raw amino-acid sequence, 217 residues long: Putative N-acetylmuramoyl-L-alanine amidase (217 aa).

The MurNAc-LAA domain occupies 3-206; it reads IAIDAGHGGQ…ISKSISIALK (204 aa).

It belongs to the N-acetylmuramoyl-L-alanine amidase 3 family.

The protein resides in the secreted. The enzyme catalyses Hydrolyzes the link between N-acetylmuramoyl residues and L-amino acid residues in certain cell-wall glycopeptides.. Its function is as follows. Cell-wall hydrolase involved in septum cleavage during cell division. The protein is Putative N-acetylmuramoyl-L-alanine amidase (amiB) of Buchnera aphidicola subsp. Baizongia pistaciae (strain Bp).